Consider the following 424-residue polypeptide: Tyrosine--tRNA ligase (424 aa).

Tyr-37 is an L-tyrosine binding site. Positions 42–51 (PTADSLHLGH) match the 'HIGH' region motif. Lys-144 bears the N6-acetyllysine mark. Tyr-175 and Gln-179 together coordinate L-tyrosine. The 'KMSKS' region signature appears at 235–239 (KFGKT). Position 238 (Lys-238) interacts with ATP. One can recognise an S4 RNA-binding domain in the interval 357–414 (ADLMQALVDSELQPSRGQARKTIASNAITINGEKQSDPEYFFKEEDRLFGRFTLLRRG).

It belongs to the class-I aminoacyl-tRNA synthetase family. TyrS type 1 subfamily. Homodimer.

Its subcellular location is the cytoplasm. It carries out the reaction tRNA(Tyr) + L-tyrosine + ATP = L-tyrosyl-tRNA(Tyr) + AMP + diphosphate + H(+). Its function is as follows. Catalyzes the attachment of tyrosine to tRNA(Tyr) in a two-step reaction: tyrosine is first activated by ATP to form Tyr-AMP and then transferred to the acceptor end of tRNA(Tyr). This is Tyrosine--tRNA ligase from Escherichia coli O8 (strain IAI1).